We begin with the raw amino-acid sequence, 345 residues long: MLTERQLLIFRAIIDHFTWTIQPVGSKNLLKEKGLPYSSATIRNEMGVLEEYGFIEKTHSSSGRVPSEKGYRFYVDYLLQLKKLDKSDRQMIRSFFSENYYEMEGLIQNSALMLSDLTNYTSILLGPEATKNHLSGFRFVPINNFQAMLILITDQGHVDNHLVTIPEGTTLSDIERMVNILNERLVGLSLDDLKVQIPMEVKELLGKHVRNYESFMHVFSDSFAQASQQKVYFGGKTNILNQPEFHDINKVREMLHLMEEEQDVYELFRDIPDGLQVKIGRENNNSLMEDCSIITATYNIAGERVGGIVLLGPTRMEYNRMMGLVDVMSRDLTDVLTKLYRDNQN.

This sequence belongs to the HrcA family.

Functionally, negative regulator of class I heat shock genes (grpE-dnaK-dnaJ and groELS operons). Prevents heat-shock induction of these operons. In Listeria welshimeri serovar 6b (strain ATCC 35897 / DSM 20650 / CCUG 15529 / CIP 8149 / NCTC 11857 / SLCC 5334 / V8), this protein is Heat-inducible transcription repressor HrcA.